Reading from the N-terminus, the 464-residue chain is Sulfoacetaldehyde dehydrogenase (acylating) (464 aa).

The active-site Nucleophile is the cysteine 241.

It belongs to the aldehyde dehydrogenase family.

The enzyme catalyses sulfoacetaldehyde + NADP(+) + CoA = sulfoacetyl-CoA + NADPH + H(+). Functionally, involved in the degradation of sulfoacetate. Catalyzes the conversion of sulfoacetyl-CoA and NADPH to sulfoacetaldehyde, CoA and NADP(+). A much lower level of activity (1%) is observed when NADP(+) is replaced with NAD(+). This is Sulfoacetaldehyde dehydrogenase (acylating) from Bilophila wadsworthia (strain 3_1_6).